The sequence spans 286 residues: UDP-3-O-acyl-N-acetylglucosamine deacetylase (286 aa).

Zn(2+)-binding residues include His-81, His-240, and Asp-244. The Proton donor role is filled by His-266.

It belongs to the LpxC family. It depends on Zn(2+) as a cofactor.

The enzyme catalyses a UDP-3-O-[(3R)-3-hydroxyacyl]-N-acetyl-alpha-D-glucosamine + H2O = a UDP-3-O-[(3R)-3-hydroxyacyl]-alpha-D-glucosamine + acetate. Its pathway is glycolipid biosynthesis; lipid IV(A) biosynthesis; lipid IV(A) from (3R)-3-hydroxytetradecanoyl-[acyl-carrier-protein] and UDP-N-acetyl-alpha-D-glucosamine: step 2/6. Catalyzes the hydrolysis of UDP-3-O-myristoyl-N-acetylglucosamine to form UDP-3-O-myristoylglucosamine and acetate, the committed step in lipid A biosynthesis. This is UDP-3-O-acyl-N-acetylglucosamine deacetylase from Francisella tularensis subsp. tularensis (strain FSC 198).